The primary structure comprises 598 residues: MRIEDFSLKDVSSSPGVYLMKDSQGTVLYVGKAKNLRNRLSSYLQKKGDSRKRIPFLMKKTTDIDTIVVSNETEAILLENNLIKKYQPRYNVLLKDDKTFFCLSVSLEHPWPRIEAIRTRALSPGKKKQWLFGPYVSAEACYALLEVISLWFPLRTCSDREFSTRQRPCVLYEMKRCLAPCVGLCSQTEYQETLDKAVLFLKGDVRSTISNLEKAIEKASQEQKFEHAAALYRTLTLIRQTMAKQHVEKFQAYDIDVLGLYRKGSLAIVSVLSVYSGKLLGARYFIFPENAQEDSALFSSFILQYYAENPRIPKEIFVPVSLDSPELPYLLNTAEPPKIRCPKTEYGKELLALAHKNAAEQAKPFNSITPPYEELQHFFNLSQYPYRIECYDNAHLQGEHNVGVCIVFENGLFSPKQYRTFSITSHGDDLAAFEEVLTRRFRSLTTELPNLIVIDGGRNQFKRAQRILEELNLTGITVVTIAKESGNHSKSLRQEKLFCETFPQGILLHPTSAILQFFQLLRDEAHRFAIQHYRKKHAKAVLTTKKIPGIGEVKTKRLLQKFKSWKRVFIASEEELKTVQGITAKDIQRIQEEGAKPE.

The region spanning Ser-13–Val-92 is the GIY-YIG domain. Residues Arg-206–Thr-241 enclose the UVR domain.

The protein belongs to the UvrC family. Interacts with UvrB in an incision complex.

The protein resides in the cytoplasm. In terms of biological role, the UvrABC repair system catalyzes the recognition and processing of DNA lesions. UvrC both incises the 5' and 3' sides of the lesion. The N-terminal half is responsible for the 3' incision and the C-terminal half is responsible for the 5' incision. The chain is UvrABC system protein C from Chlamydia trachomatis serovar A (strain ATCC VR-571B / DSM 19440 / HAR-13).